A 406-amino-acid polypeptide reads, in one-letter code: Enoyl-[acyl-carrier-protein] reductase [NADH] (406 aa).

NAD(+) is bound by residues G48–F53, F74–E75, D111–A112, and I140–A141. Y226 contributes to the substrate binding site. Residue Y236 is the Proton donor of the active site. NAD(+) contacts are provided by residues K245 and L275–T277.

It belongs to the TER reductase family. In terms of assembly, monomer.

It catalyses the reaction a 2,3-saturated acyl-[ACP] + NAD(+) = a (2E)-enoyl-[ACP] + NADH + H(+). The protein operates within lipid metabolism; fatty acid biosynthesis. Involved in the final reduction of the elongation cycle of fatty acid synthesis (FAS II). Catalyzes the reduction of a carbon-carbon double bond in an enoyl moiety that is covalently linked to an acyl carrier protein (ACP). This chain is Enoyl-[acyl-carrier-protein] reductase [NADH], found in Coxiella burnetii (strain CbuK_Q154) (Coxiella burnetii (strain Q154)).